The chain runs to 117 residues: Large ribosomal subunit protein uL18 (117 aa).

It belongs to the universal ribosomal protein uL18 family. In terms of assembly, part of the 50S ribosomal subunit; part of the 5S rRNA/L5/L18/L25 subcomplex. Contacts the 5S and 23S rRNAs.

Its function is as follows. This is one of the proteins that bind and probably mediate the attachment of the 5S RNA into the large ribosomal subunit, where it forms part of the central protuberance. The protein is Large ribosomal subunit protein uL18 of Histophilus somni (strain 129Pt) (Haemophilus somnus).